Here is a 388-residue protein sequence, read N- to C-terminus: Nesprin-4 (388 aa).

The Cytoplasmic portion of the chain corresponds to 1-339 (MALVPPLGRE…GVPAPASKRP (339 aa)). The interval 60 to 92 (ELKSTESATSPSRLPLASSHEHQDGGKPCEHSD) is disordered. Residues 78–92 (SHEHQDGGKPCEHSD) are compositionally biased toward basic and acidic residues. Positions 331–388 (VPAPASKRPLTLFFLLLFLLLVGATLLLPLSGVSCCSHARLARTPYLVLSYVNGLPPI) constitute a KASH domain. A helical; Anchor for type IV membrane protein transmembrane segment spans residues 340-360 (LTLFFLLLFLLLVGATLLLPL). Residues 361–388 (SGVSCCSHARLARTPYLVLSYVNGLPPI) are Perinuclear space-facing.

The protein belongs to the nesprin family. In terms of assembly, core component of LINC complexes which are composed of inner nuclear membrane SUN domain-containing proteins coupled to outer nuclear membrane KASH domain-containing nesprins. SUN and KASH domain-containing proteins seem to bind each other promiscuously; however, differentially expression of LINC complex constituents can give rise to specific assemblies. Probably part of a SUN1-containing LINC complex. Interacts with kinesins KIF5B and KLC1. The disulfid bond with SUN1 or SUN2 is required for stability of the respective LINC complex under tensile forces. Expressed in secretory epithelial cells, such as those found in exocrine pancreas, bulbourethral gland, mammary gland and salivary gland (at protein level). Also expressed in the cochlea, where it is restricted primarily to the 3 rows of outer hair cells and 1 row of inner hair cells (at protein level). Not detected in other cells of the cochlea, including Deiter's cells and pillar cells, nor in liver and kidney (at protein level).

It localises to the nucleus outer membrane. As a component of the LINC (LInker of Nucleoskeleton and Cytoskeleton) complex, involved in the connection between the nuclear lamina and the cytoskeleton. The nucleocytoplasmic interactions established by the LINC complex play an important role in the transmission of mechanical forces across the nuclear envelope and in nuclear movement and positioning. Behaves as a kinesin cargo, providing a functional binding site for kinesin-1 at the nuclear envelope. Hence may contribute to the establishment of secretory epithelial morphology, by promoting kinesin-dependent apical migration of the centrosome and Golgi apparatus and basal localization of the nucleus. This is Nesprin-4 (Syne4) from Mus musculus (Mouse).